Here is a 148-residue protein sequence, read N- to C-terminus: MEFRRHFTTKEWLILQASPIWVGFLVAAADGHADPKEIDENLRQTIRAATFSTGFTKEVFEDHVYMHLNDDDALSAVVETLDPLEGLKAVSILLGKIPASEAENFKDTLRNMAFKIALVSDGIDKNEEAAIKLIDLILDGQFNLPFYY.

This is an uncharacterized protein from Methanothermobacter thermautotrophicus (Methanobacterium thermoformicicum).